Consider the following 533-residue polypeptide: MFIKFYFFIIFLILNFKNNYASPTLLDSVLSSTSSLSSPGSFFIETEFCPPPLLYRYSSDLEGDKGRGYKYVEFPNGTMSHCVHPCPSLYFSDGDWTTMMDMSLIVATISFFASIFLILTYSPLMNPSYNNRHTIGILSMSFGIFLIMFTDMYNLKKRFTLGCPSETRYAIQNDADCLITGLIFQFGCVSAVFFWTALSLDLYFQITNRNISRKYDLYYFIGVNLISLIFTFVPVISKSYGYGDFALGCWILDFNYALGCFWIPLSVCLIFSTVVVLMILYEVYKIYKASNQKTSLKGHIKPLLCLISNCFEFFYVFGYSLYLATKLTELHDNMDAYIKCLFLNSQNDPDSYTCPDHRLKLGPQFLFFLSLRLLGVSGIVFYGTNSKVRKIWKNSILINNRFIGKYFSFNSGTSTPVGSKNRSKTSSQLYDNSFGDSGILEEIREYDEKVKNGIIVTPGGDDDNINNNNNNNNNNNNNNNNNNNNNNNNNNNNNNNNNNNNNNNNNNNNNSNENNENNTQEIELTNINTIDNV.

A signal peptide spans 1 to 21 (MFIKFYFFIIFLILNFKNNYA). At 22–103 (SPTLLDSVLS…GDWTTMMDMS (82 aa)) the chain is on the extracellular side. A glycan (N-linked (GlcNAc...) asparagine) is linked at Asn-76. A helical transmembrane segment spans residues 104–124 (LIVATISFFASIFLILTYSPL). Topologically, residues 125–134 (MNPSYNNRHT) are cytoplasmic. The chain crosses the membrane as a helical span at residues 135-155 (IGILSMSFGIFLIMFTDMYNL). Over 156–177 (KKRFTLGCPSETRYAIQNDADC) the chain is Extracellular. Residues 178-198 (LITGLIFQFGCVSAVFFWTAL) form a helical membrane-spanning segment. Topologically, residues 199-216 (SLDLYFQITNRNISRKYD) are cytoplasmic. A helical membrane pass occupies residues 217–237 (LYYFIGVNLISLIFTFVPVIS). At 238 to 259 (KSYGYGDFALGCWILDFNYALG) the chain is on the extracellular side. The chain crosses the membrane as a helical span at residues 260–280 (CFWIPLSVCLIFSTVVVLMIL). Over 281-302 (YEVYKIYKASNQKTSLKGHIKP) the chain is Cytoplasmic. A helical transmembrane segment spans residues 303 to 323 (LLCLISNCFEFFYVFGYSLYL). At 324–360 (ATKLTELHDNMDAYIKCLFLNSQNDPDSYTCPDHRLK) the chain is on the extracellular side. Residues 361–381 (LGPQFLFFLSLRLLGVSGIVF) form a helical membrane-spanning segment. Residues 382-533 (YGTNSKVRKI…LTNINTIDNV (152 aa)) lie on the Cytoplasmic side of the membrane. Residues 454-533 (IIVTPGGDDD…LTNINTIDNV (80 aa)) are disordered. The segment covering 466 to 518 (NNNNNNNNNNNNNNNNNNNNNNNNNNNNNNNNNNNNNNNNNNNNNSNENNENN) has biased composition (low complexity). Positions 501-528 (NNNNNNNNNNSNENNENNTQEIELTNIN) form a coiled coil. Residues 519–533 (TQEIELTNINTIDNV) show a composition bias toward polar residues.

It belongs to the G-protein coupled receptor Fz/Smo family.

The protein localises to the membrane. This chain is Frizzled/smoothened-like sans CRD protein H (fscH), found in Dictyostelium discoideum (Social amoeba).